Here is a 153-residue protein sequence, read N- to C-terminus: Nucleoside diphosphate kinase (153 aa).

6 residues coordinate ATP: K9, F57, R85, T91, R102, and N112. Residue H115 is the Pros-phosphohistidine intermediate of the active site.

This sequence belongs to the NDK family. In terms of assembly, homotetramer. It depends on Mg(2+) as a cofactor.

It is found in the cytoplasm. The enzyme catalyses a 2'-deoxyribonucleoside 5'-diphosphate + ATP = a 2'-deoxyribonucleoside 5'-triphosphate + ADP. The catalysed reaction is a ribonucleoside 5'-diphosphate + ATP = a ribonucleoside 5'-triphosphate + ADP. In terms of biological role, major role in the synthesis of nucleoside triphosphates other than ATP. The ATP gamma phosphate is transferred to the NDP beta phosphate via a ping-pong mechanism, using a phosphorylated active-site intermediate. This chain is Nucleoside diphosphate kinase, found in Parabacteroides distasonis (strain ATCC 8503 / DSM 20701 / CIP 104284 / JCM 5825 / NCTC 11152).